Consider the following 205-residue polypeptide: Macrophage immunometabolism regulator (205 aa).

The interval 1 to 40 (MEVDINGVNRTNNSVPSTTEGSSPSKPDPEKPRCSSTPCS) is disordered. Polar residues predominate over residues 8–25 (VNRTNNSVPSTTEGSSPS).

This sequence belongs to the UNC119-binding protein family. As to quaternary structure, interacts with unc119 family proteins; interaction preferentially takes place when unc119 proteins are unliganded with myristoylated proteins.

The protein resides in the cytoplasm. The protein localises to the cell projection. It is found in the cilium. Its function is as follows. May play a role in immune regulation through regulation of the macrophage function. May also play a role in trafficking of proteins via its interaction with unc119 family cargo adapters. May play a role in ciliary membrane localization. The chain is Macrophage immunometabolism regulator (macir) from Xenopus tropicalis (Western clawed frog).